The primary structure comprises 228 residues: Urease accessory protein UreF (228 aa).

The protein belongs to the UreF family. UreD, UreF and UreG form a complex that acts as a GTP-hydrolysis-dependent molecular chaperone, activating the urease apoprotein by helping to assemble the nickel containing metallocenter of UreC. The UreE protein probably delivers the nickel.

It is found in the cytoplasm. Functionally, required for maturation of urease via the functional incorporation of the urease nickel metallocenter. In Brucella ovis (strain ATCC 25840 / 63/290 / NCTC 10512), this protein is Urease accessory protein UreF.